The primary structure comprises 344 residues: 4-dimethylallyltryptophan N-methyltransferase easF (344 aa).

This sequence belongs to the methyltransferase superfamily. As to quaternary structure, homodimer.

It carries out the reaction 4-(3-methylbut-2-enyl)-L-tryptophan + S-adenosyl-L-methionine = 4-(3-methylbut-2-enyl)-L-abrine + S-adenosyl-L-homocysteine + H(+). Its pathway is alkaloid biosynthesis; ergot alkaloid biosynthesis. Its function is as follows. 4-dimethylallyltryptophan N-methyltransferase; part of the gene cluster that mediates the biosynthesis of fungal ergot alkaloid ergovaline, the predominant ergopeptine product in E.festucae var. lolii. DmaW catalyzes the first step of ergot alkaloid biosynthesis by condensing dimethylallyl diphosphate (DMAP) and tryptophan to form 4-dimethylallyl-L-tryptophan. The second step is catalyzed by the methyltransferase easF that methylates 4-dimethylallyl-L-tryptophan in the presence of S-adenosyl-L-methionine, resulting in the formation of 4-dimethylallyl-L-abrine. The catalase easC and the FAD-dependent oxidoreductase easE then transform 4-dimethylallyl-L-abrine to chanoclavine-I which is further oxidized by easD in the presence of NAD(+), resulting in the formation of chanoclavine-I aldehyde. Agroclavine dehydrogenase easG then mediates the conversion of chanoclavine-I aldehyde to agroclavine via a non-enzymatic adduct reaction: the substrate is an iminium intermediate that is formed spontaneously from chanoclavine-I aldehyde in the presence of glutathione. The presence of easA is not required to complete this reaction. Further conversion of agroclavine to paspalic acid is a two-step process involving oxidation of agroclavine to elymoclavine and of elymoclavine to paspalic acid, the second step being performed by the elymoclavine oxidase cloA. Paspalic acid is then further converted to D-lysergic acid. Ergovaline is assembled from D-lysergic acid and three different amino acids by the D-lysergyl-peptide-synthetase composed of a monomudular (lpsB) and a trimodular (lpsA) nonribosomal peptide synthetase subunit. The chain is 4-dimethylallyltryptophan N-methyltransferase easF from Epichloe festucae var. lolii (Neotyphodium lolii).